Consider the following 1663-residue polypeptide: Complement C3 (1663 aa).

The first 22 residues, 1-22, serve as a signal peptide directing secretion; the sequence is MGPTSGPSLLLLLLTHLPLALG. Phosphoserine; by FAM20C is present on residues S38 and S70. N-linked (GlcNAc...) asparagine glycosylation is present at N85. S297 and S303 each carry phosphoserine; by FAM20C. 13 disulfides stabilise this stretch: C559–C816, C627–C662, C693–C720, C694–C727, C707–C728, C873–C1513, C1101–C1158, C1358–C1489, C1389–C1458, C1506–C1511, C1518–C1590, C1537–C1661, and C1637–C1646. S672 is subject to Phosphoserine; by FAM20C. Positions 693–728 constitute an Anaphylatoxin-like domain; the sequence is CCEDGMRENPMRFSCQRRTRFISLGEACKKVFLDCC. N-linked (GlcNAc...) asparagine glycosylation occurs at N939. The interval 954-973 is disordered; sequence REGVQKEDIPPADLSDQVPD. S968 carries the post-translational modification Phosphoserine; by FAM20C. The isoglutamyl cysteine thioester (Cys-Gln) cross-link spans 1010-1013; it reads CGEQ. Phosphoserine; by FAM20C is present on S1321. The 144-residue stretch at 1518-1661 folds into the NTR domain; it reads CFIQKSDDKV…FTESMVVFGC (144 aa). A Phosphoserine; by FAM20C modification is found at S1573. N1617 carries N-linked (GlcNAc...) asparagine glycosylation. The interaction with CFP/properdin stretch occupies residues 1634–1659; sequence EDECQDEENQKQCQDLGAFTESMVVF.

As to quaternary structure, in absence of complement activation, the C3 precursor is first processed by the removal of 4 Arg residues, forming two chains, beta and alpha, linked by a disulfide bond. In terms of assembly, complement C3b is composed of complement C3b and complement C3 beta chains that are associated via disulfide bonds. Non-enzymatic component of the C5 convertase, also named C4bC2bC3b, composed of the serine protease complement C2b (C2), complement C3b, as well as complement C4b (C4). Non-enzymatic component of the C5 convertase of the alternative complement pathways composed of the serine protease complement CFB and complement C3b. Interacts with CFP; interaction takes place together with CFB in the alternative complement system and allows the complex to become active. Interacts with CR1 (via Sushi 8 and Sushi 9 domains). Interacts with CFH. Interacts with CFH. Interacts with CR2. As to quaternary structure, during pregnancy, C3dg exists as a complex (probably a 2:2:2 heterohexamer) with AGT and the proform of PRG2. Interacts with CR2 (via the N-terminal Sushi domains 1 and 2). In terms of assembly, (Microbial infection) C3b interacts with herpes simplex virus 1 (HHV-1) and herpes simplex virus 2 (HHV-2) envelope glycoprotein C; this interaction inhibits the activation of the complement system. (Microbial infection) Interacts with Staphylococcus aureus immunoglobulin-binding protein Sbi; this interaction prevents the association between C3dg and CR2. As to quaternary structure, (Microbial infection) Interacts with Staphylococcus aureus protein Fib. C3 precursor is first processed by the removal of 4 Arg residues, forming two chains, beta and alpha, linked by a disulfide bond. During activation of the complement systems, the alpha chain is cleaved into C3a and C3b by the C3 convertase: C3b stays linked to the beta chain, while C3a is released in the plasma. The alpha chain is cleaved by the serine protease complement C2b component of the C3 convertase to generate C3a and C3b following activation by the classical, lectin and GZMK complement systems. The alpha chain is cleaved by CFB component of the C3 convertase to generate C3a and C3b following activation by the alternative complement system. In terms of processing, C3a is further processed by carboxypeptidases to release the C-terminal arginine residue generating the acylation stimulating protein (ASP). Levels of ASP are increased in adipocytes in the postprandial period and by insulin and dietary chylomicrons. Post-translationally, complement C3b is rapidly split in two positions by factor I (CFI) and a cofactor (CFH) to form iC3b (inactivated C3b) and C3f which is released. CFI and CFH catalyze proteolytic degradation of already-deposited complement C3b. Then iC3b is slowly cleaved (possibly by CFI) to form C3c (beta chain + alpha' chain fragment 1 + alpha' chain fragment 2), C3dg and C3f. Other proteases produce other fragments such as C3d or C3g. Upon activation, the internal thioester bond reacts with carbohydrate antigens on the target surface to form amide or ester bonds, leading to covalent association with the surface of pathogens. In terms of processing, complement C3b interacts with complement C4b via a thioester linkage. Post-translationally, phosphorylated by FAM20C in the extracellular medium. (Microbial infection) C3 is cleaved by Staphylococcus aureus aureolysin; this cleavage renders C3a and C3b inactive. C3b is rapidly degraded by host factors CFH and CFI preventing its deposition on the bacterial surface while C3a is further inactivated by aureolysin. In terms of processing, (Microbial infection) Complement C3 beta chain is cleaved and inactivated by S.pyogenes SpeB. Post-translationally, (Microbial infection) Cleaved by N.meningitidis NalP between Leu-744 and Gly-745, generating a slightly shorter C3 alpha form and a slightly longer C3 beta form. The C3b-like fragment is degraded in the presence of the complement regulators CFH and CFI, preventing its deposition on the bacterial surface. Plasma. In terms of tissue distribution, produced in adipocytes and released into the plasma during both the fasting and postprandial periods.

The protein localises to the secreted. The protein resides in the cell surface. Its activity is regulated as follows. Complement activation is inhibited by VSIG4. In terms of biological role, precursor of non-enzymatic components of the classical, alternative, lectin and GZMK complement pathways, which consist in a cascade of proteins that leads to phagocytosis and breakdown of pathogens and signaling that strengthens the adaptive immune system. Non-enzymatic component of C5 convertase. Generated following cleavage by C3 convertase, it covalently attaches to the surface of pathogens, where it acts as an opsonin that marks the surface of antigens for removal. Complement C3b binds covalently via its reactive thioester, to cell surface carbohydrates or immune aggregates. Together with complement C4b, it then recruits the serine protease complement C2b to form the C5 convertase, which cleaves and activate C5, the next component of the complement pathways. In the alternative complement pathway, recruits the serine protease CFB to form the C5 convertase that cleaves and activates C5. Its function is as follows. Mediator of local inflammatory process released following cleavage by C3 convertase. Acts by binding to its receptor, C3AR1, activating G protein-coupled receptor signaling, promoting the phosphorylation, ARRB2-mediated internalization and endocytosis of C3AR1. C3a anaphylatoxin stimulates the activation of immune cells such as mast cells and basophilic leukocytes to release inflammation agents, such as cytokines, chemokines and histamine, which promote inflammation development. Also acts as potent chemoattractant for the migration of macrophages and neutrophils to the inflamed tissues, resulting in neutralization of the inflammatory triggers by multiple ways, such as phagocytosis and generation of reactive oxidants. Functionally, adipogenic hormone that stimulates triglyceride synthesis and glucose transport in adipocytes, regulating fat storage and playing a role in postprandial triglyceride clearance. Appears to stimulate triglyceride synthesis via activation of the PLC, MAPK and AKT signaling pathways. Acts by binding to its receptor, C5AR2, activating G protein-coupled receptor signaling, promoting the phosphorylation, ARRB2-mediated internalization and endocytosis of C5AR2. In terms of biological role, acts as a chemoattractant for neutrophils in chronic inflammation. This chain is Complement C3, found in Homo sapiens (Human).